Consider the following 216-residue polypeptide: UPF0598 protein C8orf82 (216 aa).

The protein belongs to the UPF0598 family.

The sequence is that of UPF0598 protein C8orf82 (C8orf82) from Homo sapiens (Human).